An 842-amino-acid chain; its full sequence is MSRPLSDQEKRKQISVRGLAGVENVTELKKNFNRHLHFTLVKDRNVATPRDYYFALAHTVRDHLVGRWIRTQQHYYEKDPKRIYYLSLEFYMGRTLQNTMVNLALENACDEATYQLGLDMEELEEIEEDAGLGNGGLGRLAACFLDSMATLGLAAYGYGIRYEFGIFNQKISGGWQMEEADDWLRYGNPWEKARPEFTLPVHFYGHVEHTSQGAKWVDTQVVLAMPYDTPVPGYRNNVVNTMRLWSAKAPNDFNLKDFNVGGYIQAVLDRNLAENISRVLYPNDNFFEGKELRLKQEYFVVAATLQDIIRRFKSSKFGCRDPVRTNFDAFPDKVAIQLNDTHPSLAIPELMRILVDLERMDWDKAWDVTVRTCAYTNHTVLPEALERWPVHLLETLLPRHLQIIYEINQRFLNRVAAAFPGDVDRLRRMSLVEEGAVKRINMAHLCIAGSHAVNGVARIHSEILKKTIFKDFYELEPHKFQNKTNGITPRRWLVLCNPGLAEVIAERIGEDFISDLDQLRKLLSFVDDEAFIRDVAKVKQENKLKFAAYLEREYKVHINPNSLFDIQVKRIHEYKRQLLNCLHVITLYNRIKREPNKFFVPRTVMIGGKAAPGYHMAKMIIRLVTAIGDVVNHDPAVGDRLRVIFLENYRVSLAEKVIPAADLSEQISTAGTEASGTGNMKFMLNGALTIGTMDGANVEMAEEAGEENFFIFGMRVEDVDKLDQRGYNAQEYYDRIPELRQVIEQLSSGFFSPKQPDLFKDIVNMLMHHDRFKVFADYEDYIKCQEKVSALYKNPREWTRMVIRNIATSGKFSSDRTIAQYAREIWGVEPSRQRLPAPDEAI.

Position 2 is an N-acetylserine (serine 2). Serine 15 carries the phosphoserine; by PHK; in form phosphorylase A modification. Positions 43 and 76 each coordinate AMP. 2 positions are modified to phosphotyrosine: tyrosine 204 and tyrosine 227. 310–319 (RRFKSSKFGC) contacts AMP. Serine 430 is modified (phosphoserine). At tyrosine 473 the chain carries Phosphotyrosine. A Phosphoserine modification is found at serine 514. Position 681 is an N6-(pyridoxal phosphate)lysine (lysine 681). Phosphoserine occurs at positions 747 and 748.

The protein belongs to the glycogen phosphorylase family. Homodimer. Homotetramer; to form the enzymatically active phosphorylase A. Pyridoxal 5'-phosphate is required as a cofactor. In terms of processing, phosphorylation of Ser-15 converts phosphorylase B (unphosphorylated) to phosphorylase A.

The catalysed reaction is [(1-&gt;4)-alpha-D-glucosyl](n) + phosphate = [(1-&gt;4)-alpha-D-glucosyl](n-1) + alpha-D-glucose 1-phosphate. Allosterically regulated through the non-covalent binding of metabolites, being activated by AMP and inhibited by ATP, ADP, and glucose-6-phosphate. The activity is also controlled by post-translational modifications including phosphorylation. Its function is as follows. Allosteric enzyme that catalyzes the rate-limiting step in glycogen catabolism, the phosphorolytic cleavage of glycogen to produce glucose-1-phosphate, and plays a central role in maintaining cellular and organismal glucose homeostasis. The polypeptide is Glycogen phosphorylase, muscle form (Homo sapiens (Human)).